Consider the following 1009-residue polypeptide: Glutamate receptor ionotropic, delta-1 (1009 aa).

The first 20 residues, 1–20 (MEALTLWLLPWICQCVTVRA), serve as a signal peptide directing secretion. The tract at residues 21–436 (DSIIHIGAIF…ERPMGSRLQG (416 aa)) is interaction with CBLN1. Residues 21–562 (DSIIHIGAIF…SIFSLFAPFD (542 aa)) are Extracellular-facing. Intrachain disulfides connect Cys-80–Cys-351, Cys-96–Cys-128, and Cys-294–Cys-306. 2 N-linked (GlcNAc...) asparagine glycosylation sites follow: Asn-131 and Asn-200. N-linked (GlcNAc...) asparagine glycosylation is found at Asn-422 and Asn-498. Ca(2+) is bound by residues Glu-527, Val-530, and Asp-531. Residues 563-583 (FAVWACIAAAIPVVGVLIFVL) form a helical membrane-spanning segment. Residues 584 to 637 (NRIQAVRSQSATQPRPSASATLHSAIWIVYGAFVQQGGESSVNSVAMRIVMGSW) lie on the Cytoplasmic side of the membrane. Residues 638 to 658 (WLFTLIVCSSYTANLAAFLTV) form a helical membrane-spanning segment. Residues 659 to 830 (SRMDNPIRTF…TEGKSLKLHS (172 aa)) lie on the Extracellular side of the membrane. Residues Asp-753, Asp-755, and Ser-757 each contribute to the Ca(2+) site. A helical transmembrane segment spans residues 831 to 851 (FAGVFCILAIGLLLACLVAAL). Over 852-1009 (ELWWNSNRCH…ALDTSHGTSI (158 aa)) the chain is Cytoplasmic. Over residues 931–942 (LPEQSSHGTSRT) the composition is skewed to polar residues. The segment at 931-960 (LPEQSSHGTSRTLSSGPSSNLPLPLSSSAT) is disordered. Low complexity predominate over residues 943-958 (LSSGPSSNLPLPLSSS).

The protein belongs to the glutamate-gated ion channel (TC 1.A.10.1) family. GRID1 subfamily. In terms of assembly, homodimer. Interacts (via extracellular N-terminal domain) with CBLN1 (via C1q domain), and more weakly with CBLN2; the interactions mediate the trans-synaptic adhesion complexes also with neurexins and are required for ligand-gated cation channel activity. Equally in forebrain and cerebellum.

The protein resides in the postsynaptic cell membrane. It carries out the reaction Ca(2+)(in) = Ca(2+)(out). It catalyses the reaction Na(+)(in) = Na(+)(out). Member of the ionotropic glutamate receptor family, which plays a crucial role in synaptic organization and signal transduction in the central nervous system. Although it shares structural features with ionotropic glutamate receptors, does not bind glutamate as a primary ligand. Instead, forms trans-synaptic adhesion complexes with presynaptic neurexins and cerebellins, regulating NMDA and AMPA receptor activity and influencing synaptic plasticity through signal transduction. In the presence of NRX1B-CBLN1, forms cation-selective channels that are proposed to be gated by glycine and D-serine. However, recent research disputes this ligand-gated cation channel activity. Cation-selective ion channel can be triggered by GRM1 in dopaminergic neurons. Also acts as a receptor for GABA, modulating inhibitory synaptic plasticity through non-ionotropic mechanisms. The protein is Glutamate receptor ionotropic, delta-1 (Grid1) of Mus musculus (Mouse).